A 362-amino-acid polypeptide reads, in one-letter code: Spermidine/putrescine import ATP-binding protein PotA (362 aa).

Positions 4 to 235 constitute an ABC transporter domain; sequence IKLDHITKQY…PVNDFVARFI (232 aa). 37-44 provides a ligand contact to ATP; it reads GPSGSGKT.

The protein belongs to the ABC transporter superfamily. Spermidine/putrescine importer (TC 3.A.1.11.1) family. The complex is composed of two ATP-binding proteins (PotA), two transmembrane proteins (PotB and PotC) and a solute-binding protein (PotD).

The protein resides in the cell membrane. The enzyme catalyses ATP + H2O + polyamine-[polyamine-binding protein]Side 1 = ADP + phosphate + polyamineSide 2 + [polyamine-binding protein]Side 1.. Part of the ABC transporter complex PotABCD involved in spermidine/putrescine import. Responsible for energy coupling to the transport system. This Lactobacillus delbrueckii subsp. bulgaricus (strain ATCC 11842 / DSM 20081 / BCRC 10696 / JCM 1002 / NBRC 13953 / NCIMB 11778 / NCTC 12712 / WDCM 00102 / Lb 14) protein is Spermidine/putrescine import ATP-binding protein PotA.